A 299-amino-acid chain; its full sequence is Regucalcin (299 aa).

A divalent metal cation is bound at residue glutamate 18. Substrate-binding residues include arginine 101, asparagine 103, and glutamate 121. Lysine 144 carries the N6-succinyllysine modification. Residues asparagine 154 and aspartate 204 each contribute to the a divalent metal cation site. Aspartate 204 functions as the Proton donor/acceptor in the catalytic mechanism. Lysine 244 and lysine 253 each carry N6-succinyllysine.

The protein belongs to the SMP-30/CGR1 family. In terms of assembly, monomer. Zn(2+) serves as cofactor. It depends on Mn(2+) as a cofactor. Ca(2+) is required as a cofactor. The cofactor is Mg(2+).

The protein resides in the cytoplasm. It catalyses the reaction D-glucono-1,5-lactone + H2O = D-gluconate + H(+). Functionally, gluconolactonase with low activity towards other sugar lactones, including gulonolactone and galactonolactone. Can also hydrolyze diisopropyl phosphorofluoridate and phenylacetate (in vitro). Calcium-binding protein. Modulates Ca(2+) signaling, and Ca(2+)-dependent cellular processes and enzyme activities. The protein is Regucalcin (RGN) of Macaca fascicularis (Crab-eating macaque).